The chain runs to 560 residues: Eukaryotic translation initiation factor 3 subunit D-1 (560 aa).

Residues 98–166 (VQKPPHQRGR…RGPPPKMRES (69 aa)) are disordered. A compositionally biased stretch (basic residues) spans 100-121 (KPPHQRGRFRNMRNSRSGRGRN). T128 is modified (phosphothreonine). Residues 147 to 156 (GRGMGKKFGH) show a composition bias toward basic residues. Positions 291-305 (EFDLLTVNESSVEPP) are RNA gate.

This sequence belongs to the eIF-3 subunit D family. As to quaternary structure, component of the eukaryotic translation initiation factor 3 (eIF-3) complex. The eIF-3 complex interacts with pix.

The protein localises to the cytoplasm. In terms of biological role, mRNA cap-binding component of the eukaryotic translation initiation factor 3 (eIF-3) complex, which is involved in protein synthesis of a specialized repertoire of mRNAs and, together with other initiation factors, stimulates binding of mRNA and methionyl-tRNAi to the 40S ribosome. The eIF-3 complex specifically targets and initiates translation of a subset of mRNAs involved in cell proliferation. In the eIF-3 complex, eif3d specifically recognizes and binds the 7-methylguanosine cap of a subset of mRNAs. The protein is Eukaryotic translation initiation factor 3 subunit D-1 of Drosophila melanogaster (Fruit fly).